The primary structure comprises 445 residues: 2-oxoisovalerate dehydrogenase subunit alpha, mitochondrial (445 aa).

The N-terminal 45 residues, 1–45 (MAVAIAAARVWRPNRGLSQAALLLLWRPGARGLARSHPHRQQQQF), are a transit peptide targeting the mitochondrion. Thiamine diphosphate-binding residues include Y158 and R159. S206 contacts K(+). S207 provides a ligand contact to thiamine diphosphate. Positions 208, 211, and 212 each coordinate K(+). E238 contacts Mg(2+). Positions 239, 240, and 265 each coordinate thiamine diphosphate. Mg(2+) is bound by residues N267 and Y269. H336 contacts thiamine diphosphate. Position 337 is a phosphoserine; by BCKDK (S337). At T338 the chain carries Phosphothreonine. Phosphoserine is present on residues S339 and S347. An N6-acetyllysine; alternate modification is found at K356. Residue K356 is modified to N6-succinyllysine; alternate. K380 carries the N6-succinyllysine modification.

The protein belongs to the BCKDHA family. As to quaternary structure, heterotetramer of 2 alpha/BCKDHA and 2 beta chains/BCKDHB that forms the branched-chain alpha-keto acid decarboxylase (E1) component of the BCKD complex. The branched-chain alpha-ketoacid dehydrogenase is a large complex composed of three major building blocks E1, E2 and E3. It is organized around E2, a 24-meric cubic core composed of DBT, to which are associated 6 to 12 copies of E1, and approximately 6 copies of the dehydrogenase E3, a DLD dimer. Interacts with PPM1K. Requires thiamine diphosphate as cofactor. The cofactor is Mg(2+). Post-translationally, phosphorylated at Ser-337 by BCKDK and dephosphorylated by protein phosphatase PPM1K.

It is found in the mitochondrion matrix. The enzyme catalyses N(6)-[(R)-lipoyl]-L-lysyl-[protein] + 3-methyl-2-oxobutanoate + H(+) = N(6)-[(R)-S(8)-2-methylpropanoyldihydrolipoyl]-L-lysyl-[protein] + CO2. In terms of biological role, together with BCKDHB forms the heterotetrameric E1 subunit of the mitochondrial branched-chain alpha-ketoacid dehydrogenase (BCKD) complex. The BCKD complex catalyzes the multi-step oxidative decarboxylation of alpha-ketoacids derived from the branched-chain amino-acids valine, leucine and isoleucine producing CO2 and acyl-CoA which is subsequently utilized to produce energy. The E1 subunit catalyzes the first step with the decarboxylation of the alpha-ketoacid forming an enzyme-product intermediate. A reductive acylation mediated by the lipoylamide cofactor of E2 extracts the acyl group from the E1 active site for the next step of the reaction. This chain is 2-oxoisovalerate dehydrogenase subunit alpha, mitochondrial (BCKDHA), found in Macaca fascicularis (Crab-eating macaque).